The chain runs to 417 residues: MEWPWSAIAASSSSSSSCFFASPNSCLSITRRTNLSCVNTSVKSLRHSRFDSKHNLVKRRINGDSVVRRSTTSNNSTEETESSSSSSSVDCVGMGSDVECVNNGEDEENRSSGILSGGEGTFLEWTVLISPFFFWGTAMVAMKEVLPITGPFFVAAFRLIPAGLLLVAFAVYKGRPLPEGINAWFSIALFALVDATCFQGFLAQGLQRTSAGLGSVIIDSQPLTVAVLASFLFGESIGIVRAGGLLLGVAGLLLLEVPSVTSDGNNFSLWGSGEWWMLLAAQSMAIGTVMVRWVSKYSDPIMATGWHMVIGGLPLLAISVINHDPVFNGSLQDLSTNDVIALLYTSIFGSAVSYGVYFYSATKGSLTKLSSLTFLTPMFASIFGYLYLNETFSSLQLVGAAVTLVAIYLVNFPEGND.

The transit peptide at 1–68 directs the protein to the chloroplast; the sequence is MEWPWSAIAA…RRINGDSVVR (68 aa). The disordered stretch occupies residues 67 to 92; that stretch reads VRRSTTSNNSTEETESSSSSSSVDCV. The span at 68-89 shows a compositional bias: low complexity; sequence RRSTTSNNSTEETESSSSSSSV. Transmembrane regions (helical) follow at residues 122 to 142, 152 to 172, 183 to 203, 213 to 233, 237 to 257, 269 to 289, 301 to 321, 339 to 359, 369 to 389, and 392 to 412; these read FLEW…MVAM, FFVA…FAVY, AWFS…GFLA, LGSV…SFLF, IGIV…LLEV, LWGS…IGTV, IMAT…ISVI, VIAL…VYFY, LSSL…LYLN, and FSSL…LVNF. EamA domains are found at residues 133–255 and 283–411; these read FFWG…LLLL and SMAI…YLVN.

Belongs to the drug/metabolite transporter (DMT) superfamily. Plant drug/metabolite exporter (P-DME) (TC 2.A.7.4) family.

The protein localises to the plastid. Its subcellular location is the chloroplast membrane. The sequence is that of WAT1-related protein At3g02690, chloroplastic from Arabidopsis thaliana (Mouse-ear cress).